Here is a 418-residue protein sequence, read N- to C-terminus: MTLLALGINHKTAPVSLRERVSFSPDKLDQALDSLLAQPMVQGGVVLSTCNRTELYLSVEERDDLQEALIRWLCDYHNLNEDDLRNSLYWHQDNDAVSHLMRVASGLDSLVLGEPQILGQVKKAFADSQKGHMKASELERMFQKSFSVAKRVRTETDIGASAVSVAFAACTLARQIFESLSTVTVLLVGAGETIELVTRHLREHKVQKMIIANRTRERAQILADEVGAEVIALSDIDERLREADIIISSTASPLPIIGKGMVERALKSRRNQPMLLVDIAVPRDVEPEVGKLANAYLYSVDDLQSIISHNLAQRKAAAVEAETIVAQEASEFMAWLRAQSASETIRDYRSQAEQVRDELTAKALAALEQGGDAQTIMQDLAWKLTNRLIHAPTKSLQQAARDGDNERLNILRDSLGLE.

Residues 49 to 52, Ser-109, 114 to 116, and Gln-120 each bind substrate; these read TCNR and EPQ. Cys-50 (nucleophile) is an active-site residue. An NADP(+)-binding site is contributed by 189–194; sequence GAGETI.

Belongs to the glutamyl-tRNA reductase family. As to quaternary structure, homodimer.

It catalyses the reaction (S)-4-amino-5-oxopentanoate + tRNA(Glu) + NADP(+) = L-glutamyl-tRNA(Glu) + NADPH + H(+). The protein operates within porphyrin-containing compound metabolism; protoporphyrin-IX biosynthesis; 5-aminolevulinate from L-glutamyl-tRNA(Glu): step 1/2. Catalyzes the NADPH-dependent reduction of glutamyl-tRNA(Glu) to glutamate 1-semialdehyde (GSA). The chain is Glutamyl-tRNA reductase from Escherichia coli O1:K1 / APEC.